We begin with the raw amino-acid sequence, 697 residues long: MASFSQVINPMTGQNTWQERGDDYDYHQEVANAGFGDMLHDWERNQKYYAALRKTIAAMRKAGKEVHALDIGTGTGILAMMALRAGADTVTACEAFMPMANCAARILAANDAAQVRLIRKRSTDIQMGIDMPHRANLLVAELLDTELIGEGAISIYNHAHQELLTDDALCIPARATCYAQVAQSPLATQWNSLKVLPSLDGDILLRPPAQLMECSGEAALHDVQLSQLPPNSFHTLTEPAQIFQFDFQRKQPREQQREHVLRLQLSKPGSVELVFYWWQIELDDAGEQLLSCAPYWAHPELQQLQKSFKDADRPLPNIVPWRDHWMQAIYYIPKPLQLHQAGEQFWLRCYHDEYSLWFDAHKEQPEQPARRHSCSCDLHLTYTRNRIGQLNQGTRNKRYLAYLEQAVQQAKPAHVLVIGDGCLLGLASSALGACSVRCLEPHRFSRRLLESVAKHNKLKNVRFLESLQQLEPEELNTLTHIFAEPYFLNAILPWDNFYFGTLLLQLQQQQKLSESVEISPCAARIYALPVQFLDLHKIRTPIISCEGFDLTLFDEMVQRSAKQALSQVEAQPLWEYPCRALAEPQLLLSVNFANFGVEQHNQGCLELTAKGNCNGVALWVDWQLAANNSSKSIVSTGPLEPIVPGQFVKWDMFVRQGVHFPSQTDDQTHLKWSTTLRPLLGELTFNFSLQASHEETK.

SAM-dependent MTase PRMT-type domains lie at Q14–W357 and E366–K697.

The protein belongs to the class I-like SAM-binding methyltransferase superfamily. Protein arginine N-methyltransferase family. PRMT7 subfamily.

Its function is as follows. Essential arginine methyltransferase that can both catalyze the formation of omega-N monomethylarginine (MMA) and symmetrical dimethylarginine (sDMA). Specifically mediates the symmetrical dimethylation of arginine residues in the small nuclear ribonucleoproteins SmD1 and SmD3. In Drosophila virilis (Fruit fly), this protein is Protein arginine N-methyltransferase 7 (Art7).